The chain runs to 140 residues: Hexon-interlacing protein (140 aa).

The stretch at 100–127 (LTALLAQLDSLTRELNVVSQQLLDLRQQ) forms a coiled coil. Residue Ser-135 is modified to Phosphoserine; by host.

It belongs to the adenoviridae hexon-interlacing protein family. Homotrimer. Interacts with hexon protein; this interaction tethers the hexons together. Self-interacts with adjacent proteins. Interacts with kinesin light chain KLC1; this interaction leads to capsid disruption at the nuclear pore complex during virus entry into host cell.

Its subcellular location is the virion. It localises to the host nucleus. Its function is as follows. Structural component of the virion that forms triskelion structures consisting of three molecules that stabilize three hexon trimers at the center of each icosahedral facet and fixes the peripentonal hexons. Dispensable for assembly. During virus entry, recruits the anterograde motor kinesin-1 to the capsid docked at the nuclear pore complex thereby subjecting the docked capsid to a pulling force. The resulting tension leads to capsid disruption, dispersion of capsid fragments toward cell periphery and eventually viral DNA entry into the host nucleus. The protein is Hexon-interlacing protein of Human adenovirus C serotype 2 (HAdV-2).